Reading from the N-terminus, the 345-residue chain is Viral Fc-gamma receptor-like protein UL119 (345 aa).

An N-terminal signal peptide occupies residues 1-23 (MCSVLAIALVVALLGDMHPGVKS). The segment at 23-43 (SSTTSAVTSPSNTTVTSTTSI) is disordered. At 24–293 (STTSAVTSPS…IKSDPLFEDR (270 aa)) the chain is on the virion surface side. N-linked (GlcNAc...) asparagine; by host glycosylation is found at Asn34, Asn48, Asn95, Asn104, Asn148, Asn179, Asn198, Asn217, Asn225, Asn241, Asn244, and Asn260. An Ig-like V-type domain is found at 91 to 190 (QVSLNATCKV…TWDLFTYPIY (100 aa)). The chain crosses the membrane as a helical span at residues 294–314 (LLAYGVLAFLVFMVIILLYVT). Over 315-345 (YMLARRRDWSYKRLEEPVEEKKHPVPYFKQW) the chain is Intravirion.

The protein localises to the virion membrane. Serves as a receptor for the Fc part of human IgG. May thus be involved in interfering with host Ig-mediated immune responses. The polypeptide is Viral Fc-gamma receptor-like protein UL119 (UL119/UL118) (Homo sapiens (Human)).